A 300-amino-acid polypeptide reads, in one-letter code: Protoheme IX farnesyltransferase (300 aa).

Transmembrane regions (helical) follow at residues 24–44 (VTQL…PGMV), 48–68 (VLLG…AINC), 94–114 (LQIL…LYTF), 118–138 (LTIW…TLLL), 146–166 (IVIG…AVTG), 172–192 (AWIL…VLAL), 217–237 (LHIL…FISG), 239–259 (SGAV…AYAW), and 278–298 (IVYL…RPVI).

Belongs to the UbiA prenyltransferase family. Protoheme IX farnesyltransferase subfamily.

It is found in the cell inner membrane. It carries out the reaction heme b + (2E,6E)-farnesyl diphosphate + H2O = Fe(II)-heme o + diphosphate. It participates in porphyrin-containing compound metabolism; heme O biosynthesis; heme O from protoheme: step 1/1. Converts heme B (protoheme IX) to heme O by substitution of the vinyl group on carbon 2 of heme B porphyrin ring with a hydroxyethyl farnesyl side group. The protein is Protoheme IX farnesyltransferase of Burkholderia mallei (strain NCTC 10247).